A 297-amino-acid polypeptide reads, in one-letter code: Probable lipid kinase YegS-like (297 aa).

Residues 2-131 (STFPASLLIL…IDIARVNDKT (130 aa)) form the DAGKc domain. Residues Thr40, 66–72 (GDGTINE), and Thr93 each bind ATP. Mg(2+)-binding residues include Leu213, Asp216, and Leu218. Catalysis depends on Glu269, which acts as the Proton acceptor.

Belongs to the diacylglycerol/lipid kinase family. YegS lipid kinase subfamily. It depends on Mg(2+) as a cofactor. Requires Ca(2+) as cofactor.

The protein resides in the cytoplasm. In terms of biological role, probably phosphorylates lipids; the in vivo substrate is unknown. This Klebsiella pneumoniae (strain 342) protein is Probable lipid kinase YegS-like.